Consider the following 211-residue polypeptide: HTH-type transcriptional regulator AlkX (211 aa).

In terms of domain architecture, HTH tetR-type spans 22 to 82 (ALLRDSVLDA…GYALRLADRL (61 aa)). A DNA-binding region (H-T-H motif) is located at residues 45–64 (TLSDVARAAGISRQTIYNEF).

Homodimer.

The protein resides in the cytoplasm. Its activity is regulated as follows. DNA-binding activity may be regulated by fatty acids. In terms of biological role, represses the expression of the alkB-rubAB operon, which encodes the alkane hydroxylase AlkB and the rubredoxins RubA and RubB. Acts by binding to the promoter region of the operon. In addition, EMSA analysis show that AlkX can bind to the promoter region of mmpS1 and mmpL3 and to the intragenic region of mmpL11, suggesting that it may participate in the regulatory network that controls the expression of MmpL lipid transporters. In Mycobacterium tuberculosis (strain ATCC 25618 / H37Rv), this protein is HTH-type transcriptional regulator AlkX.